We begin with the raw amino-acid sequence, 229 residues long: Response regulator SaeR (229 aa).

A Response regulatory domain is found at His3–Leu116. Residue Asp51 is modified to 4-aspartylphosphate. Residues Ile128–Arg227 constitute a DNA-binding region (ompR/PhoB-type).

Post-translationally, phosphorylated by SaeS.

The protein localises to the cytoplasm. In terms of biological role, member of the two-component regulatory system SaeR/SaeS. Probably functions as a transcriptional regulator via a specific DNA-binding domain, recognizing motifs near the promoter sequences of target genes. This chain is Response regulator SaeR (saeR), found in Staphylococcus epidermidis (strain ATCC 35984 / DSM 28319 / BCRC 17069 / CCUG 31568 / BM 3577 / RP62A).